Here is a 186-residue protein sequence, read N- to C-terminus: Napin embryo-specific (186 aa).

An N-terminal signal peptide occupies residues 1 to 21; that stretch reads MANKLFLVSATLALFFLLTNA. Propeptides lie at residues 22-38 and 77-97; these read SVYR…ATNP and PSWT…QQQG.

This sequence belongs to the 2S seed storage albumins family. As to quaternary structure, the mature protein consists of a small and a large chain linked by disulfide bonds. In terms of tissue distribution, cotyledons and the axis.

Functionally, the small, basic, water-soluble napins are one of the two major kinds of storage proteins synthesized in the seed during its maturation. The chain is Napin embryo-specific from Brassica napus (Rape).